Here is a 186-residue protein sequence, read N- to C-terminus: Elongation factor P (186 aa).

Belongs to the elongation factor P family.

The protein resides in the cytoplasm. It functions in the pathway protein biosynthesis; polypeptide chain elongation. Functionally, involved in peptide bond synthesis. Stimulates efficient translation and peptide-bond synthesis on native or reconstituted 70S ribosomes in vitro. Probably functions indirectly by altering the affinity of the ribosome for aminoacyl-tRNA, thus increasing their reactivity as acceptors for peptidyl transferase. The sequence is that of Elongation factor P from Cupriavidus necator (strain ATCC 17699 / DSM 428 / KCTC 22496 / NCIMB 10442 / H16 / Stanier 337) (Ralstonia eutropha).